Here is a 100-residue protein sequence, read N- to C-terminus: NADH-quinone oxidoreductase subunit K (100 aa).

3 helical membrane passes run 4–24 (YEYYVALSGLLMVLGFIGVIV), 28–48 (IIAMLISTELMLNAVNVAFVA), and 60–80 (VFVFFILTIAAAEAAIGLGLI).

Belongs to the complex I subunit 4L family. As to quaternary structure, NDH-1 is composed of 14 different subunits. Subunits NuoA, H, J, K, L, M, N constitute the membrane sector of the complex.

Its subcellular location is the cell inner membrane. The enzyme catalyses a quinone + NADH + 5 H(+)(in) = a quinol + NAD(+) + 4 H(+)(out). Functionally, NDH-1 shuttles electrons from NADH, via FMN and iron-sulfur (Fe-S) centers, to quinones in the respiratory chain. The immediate electron acceptor for the enzyme in this species is believed to be ubiquinone. Couples the redox reaction to proton translocation (for every two electrons transferred, four hydrogen ions are translocated across the cytoplasmic membrane), and thus conserves the redox energy in a proton gradient. This Sulfurihydrogenibium azorense (strain DSM 15241 / OCM 825 / Az-Fu1) protein is NADH-quinone oxidoreductase subunit K.